We begin with the raw amino-acid sequence, 171 residues long: ATP synthase subunit b (171 aa).

The helical transmembrane segment at 2–22 (VLVKMALGFLILLSPLCAMEL) threads the bilayer.

It belongs to the ATPase B chain family. As to quaternary structure, F-type ATPases have 2 components, F(1) - the catalytic core - and F(0) - the membrane proton channel. F(1) has five subunits: alpha(3), beta(3), gamma(1), delta(1), epsilon(1). F(0) has three main subunits: a(1), b(2) and c(10-14). The alpha and beta chains form an alternating ring which encloses part of the gamma chain. F(1) is attached to F(0) by a central stalk formed by the gamma and epsilon chains, while a peripheral stalk is formed by the delta and b chains.

The protein localises to the cell inner membrane. Functionally, f(1)F(0) ATP synthase produces ATP from ADP in the presence of a proton or sodium gradient. F-type ATPases consist of two structural domains, F(1) containing the extramembraneous catalytic core and F(0) containing the membrane proton channel, linked together by a central stalk and a peripheral stalk. During catalysis, ATP synthesis in the catalytic domain of F(1) is coupled via a rotary mechanism of the central stalk subunits to proton translocation. Its function is as follows. Component of the F(0) channel, it forms part of the peripheral stalk, linking F(1) to F(0). This chain is ATP synthase subunit b, found in Helicobacter acinonychis (strain Sheeba).